Consider the following 370-residue polypeptide: tRNA-specific 2-thiouridylase MnmA (370 aa).

ATP is bound by residues 11 to 18 (AMSGGVDS) and M37. Positions 99–101 (NPD) are interaction with target base in tRNA. The active-site Nucleophile is C104. Residues C104 and C201 are joined by a disulfide bond. G129 serves as a coordination point for ATP. The interaction with tRNA stretch occupies residues 151-153 (KDQ). C201 functions as the Cysteine persulfide intermediate in the catalytic mechanism. Residues 313-314 (RY) are interaction with tRNA.

The protein belongs to the MnmA/TRMU family. In terms of assembly, interacts with TusE.

The protein localises to the cytoplasm. The catalysed reaction is S-sulfanyl-L-cysteinyl-[protein] + uridine(34) in tRNA + AH2 + ATP = 2-thiouridine(34) in tRNA + L-cysteinyl-[protein] + A + AMP + diphosphate + H(+). Catalyzes the 2-thiolation of uridine at the wobble position (U34) of tRNA(Lys), tRNA(Glu) and tRNA(Gln), leading to the formation of s(2)U34, the first step of tRNA-mnm(5)s(2)U34 synthesis. Sulfur is provided by IscS, via a sulfur-relay system. Binds ATP and its substrate tRNAs. This is tRNA-specific 2-thiouridylase MnmA from Buchnera aphidicola subsp. Baizongia pistaciae (strain Bp).